The sequence spans 528 residues: MPAVRTKSGHGVEYTDEAITATYSYNTTRVEKEANGDVTVQPIQLHLKFRTQRKVQRTGVMLIGWGGNNGTTVTAALMAHKHRXSWRTKTGTKQPDYLGSITQSSTMSVGLTSEMEEVFVPMKALVPMINPAELVIGGWDCSGMNIADAMRRAQVLDVTLQDALYNYLKDMHPLPAAFDLDFVAENQLSRADNIMQTKNKWESVEQLRADIRNFREKNSLEEVIVLWTANTERFSEHITGVHDTADHLIDAIRRNENEIAPSVLYATAAIMEGCSYVNGAPQNTLCAGLIELARRHGVFVVGDDFKSGQTKVKSGLVEFFMDAGIKPECIASYNHLGNNDGYNLAAPKQFRSKEVTKGGVLDDMVSSNSILYPPGSRGPDHCIVIKYLPYVGDSKRALDEYNFSIFMGGEQTVVLHNTCQDSLLAAPLIIDLVVLTELMHRVTVTQCDGEDCCDKKEKMTSYTHMETVLSLLSYLLKAPRVPEGTPVVNGLNRQGQAIKNVLRALVGLPPDNNMQLECRLPFLRGVGS.

NAD(+) contacts are provided by Gly-66, Gly-67, Asn-68, Asn-69, Asp-140, Gln-187, Arg-190, Thr-228, Ala-229, Asn-230, Thr-231, Gly-279, Asp-304, Ser-307, Asn-338, Asn-339, Asp-340, Lys-353, Gly-392, Asp-393, Asp-421, and Ser-422.

It belongs to the myo-inositol 1-phosphate synthase family. Requires NAD(+) as cofactor.

The protein resides in the cytoplasm. It is found in the cytosol. The enzyme catalyses D-glucose 6-phosphate = 1D-myo-inositol 3-phosphate. The protein operates within polyol metabolism; myo-inositol biosynthesis; myo-inositol from D-glucose 6-phosphate: step 1/2. Its activity is regulated as follows. Activated by ammonium ions. Key enzyme in myo-inositol biosynthesis pathway that catalyzes the conversion of glucose 6-phosphate to 1-myo-inositol 1-phosphate in a NAD-dependent manner. Rate-limiting enzyme in the synthesis of all inositol-containing compounds. De novo-synthesized myo-inositol is essential for incorporation into GPI (glycosylphosphatidylinositol) glycolipids in the bloodstream form. In Trypanosoma brucei brucei, this protein is Inositol-3-phosphate synthase.